The following is a 285-amino-acid chain: Nucleotide-binding protein in ptsN-ptsO intergenic region (285 aa).

8 to 15 (GRSGSGKS) serves as a coordination point for ATP. 60–63 (DARN) contacts GTP.

This sequence belongs to the RapZ-like family.

In terms of biological role, displays ATPase and GTPase activities. This is Nucleotide-binding protein in ptsN-ptsO intergenic region from Stutzerimonas stutzeri (Pseudomonas stutzeri).